The primary structure comprises 684 residues: Cyclic nucleotide-gated channel alpha-1 (684 aa).

Over 1–161 (MKTNIINTWH…PSGNTYYNWL (161 aa)) the chain is Cytoplasmic. The tract at residues 34–145 (ACSSFSDDDN…TKEKKEEEKK (112 aa)) is disordered. Acidic residues predominate over residues 39 to 54 (SDDDNGSLSEESENED). Residues 105–145 (SKADDKNENKKDPEKKKKKEKEKEKKKKEEKTKEKKEEEKK) show a composition bias toward basic and acidic residues. A helical transmembrane segment spans residues 162–183 (FCITLPVMYNWTMIIARACFDE). Topologically, residues 184–193 (LQSDYLEYWL) are extracellular. The chain crosses the membrane as a helical span at residues 194 to 214 (IFDYVSDVVYLADMFVRTRTG). The Cytoplasmic portion of the chain corresponds to 215 to 239 (YLEQGLLVKDRMKLIEKYKANLQFK). Residues 240–258 (LDVLSVIPTDLLYIKFGWN) traverse the membrane as a helical segment. Topologically, residues 259–263 (YPEIR) are extracellular. Residues 264–282 (LNRLLRISRMFEFFQRTET) traverse the membrane as a helical segment. Topologically, residues 283–289 (RTNYPNI) are cytoplasmic. The tract at residues 287–395 (PNIFRISNLV…GNIGSMISNM (109 aa)) is ion conduction pathway. A helical membrane pass occupies residues 290-313 (FRISNLVMYIVIIIHWNACVYYSI). Residues 314 to 336 (SKAIGFGNDTWVYPDVNDPEFGR) are Extracellular-facing. N-linked (GlcNAc...) asparagine glycosylation is present at Asn321. Transmembrane regions (helical) follow at residues 337–371 (LARK…IFVV) and 372–396 (VDFL…SNMN). Residues 354 to 357 (TIGE) are selectivity filter. Positions 397–473 (AARAEFQSRV…DTLKKVRIFA (77 aa)) are C-linker. The Cytoplasmic segment spans residues 397–684 (AARAEFQSRV…ESELTESLQD (288 aa)). The tract at residues 477 to 597 (AGLLVELVLK…EEKGRQILMK (121 aa)) is cyclic nucleotide-binding domain. 3',5'-cyclic GMP-binding residues include Gly537, Ser540, Arg553, and Thr554. 2 residues coordinate 3',5'-cyclic AMP: Arg553 and Thr554. A coiled-coil region spans residues 615 to 669 (LEEKVTRMEGSVDLLQTRFARILAEYESMQQKLKQRLTKVEKFLKPLIETEFSAL).

This sequence belongs to the cyclic nucleotide-gated cation channel (TC 1.A.1.5) family. CNGA1 subfamily. In terms of assembly, forms heterotetrameric channels composed of CNGA1 and CNGB1 subunits with 3:1 stoichiometry. May also form cyclic nucleotide-activated homotetrameric channels, that are efficiently activated by saturating cGMP, but poorly activated by saturating cAMP compared to the heterotetramer with CNGB1. The channel binds Ca(2+)-bound CALM1 via CaM1 and CaM2 regions of the CNGB1 subunit; this interaction modulates the affinity of the channel for cNMPs in response to intracellular Ca(2+) levels. As to expression, rod cells in the retina and inner medulla of kidney.

The protein localises to the cell membrane. It catalyses the reaction Ca(2+)(in) = Ca(2+)(out). The enzyme catalyses Na(+)(in) = Na(+)(out). The catalysed reaction is K(+)(in) = K(+)(out). It carries out the reaction NH4(+)(in) = NH4(+)(out). It catalyses the reaction Rb(+)(in) = Rb(+)(out). The enzyme catalyses Li(+)(in) = Li(+)(out). The catalysed reaction is Cs(+)(in) = Cs(+)(out). Its function is as follows. Pore-forming subunit of the rod cyclic nucleotide-gated channel. Mediates rod photoresponses at dim light converting transient changes in intracellular cGMP levels into electrical signals. In the dark, cGMP levels are high and keep the channel open enabling a steady inward current carried by Na(+) and Ca(2+) ions that leads to membrane depolarization and neurotransmitter release from synaptic terminals. Upon photon absorption cGMP levels decline leading to channel closure and membrane hyperpolarization that ultimately slows neurotransmitter release and signals the presence of light, the end point of the phototransduction cascade. Conducts cGMP- and cAMP-gated ion currents, with permeability for monovalent and divalent cations. The selectivity for Ca(2+) over Na(+) increases with cGMP concentrations, whereas the selectivity among monovalent ions is independent of the cGMP levels. The polypeptide is Cyclic nucleotide-gated channel alpha-1 (Cnga1) (Mus musculus (Mouse)).